A 306-amino-acid polypeptide reads, in one-letter code: UDP-N-acetylenolpyruvoylglucosamine reductase (306 aa).

One can recognise an FAD-binding PCMH-type domain in the interval 28 to 194 (KIGNISKLFL…LKTELNLKKE (167 aa)). The Proton donor role is filled by serine 223. Residue glutamate 295 is part of the active site.

Belongs to the MurB family. The cofactor is FAD.

It is found in the cytoplasm. It catalyses the reaction UDP-N-acetyl-alpha-D-muramate + NADP(+) = UDP-N-acetyl-3-O-(1-carboxyvinyl)-alpha-D-glucosamine + NADPH + H(+). Its pathway is cell wall biogenesis; peptidoglycan biosynthesis. In terms of biological role, cell wall formation. The polypeptide is UDP-N-acetylenolpyruvoylglucosamine reductase (Borrelia garinii subsp. bavariensis (strain ATCC BAA-2496 / DSM 23469 / PBi) (Borreliella bavariensis)).